Reading from the N-terminus, the 131-residue chain is Small ribosomal subunit protein bS6 (131 aa).

At lysine 93 the chain carries N6-acetyllysine. The segment at 98–131 is disordered; sequence EASPMVKAKDERRERRDDFANETADDAEAGDSEE. Residues 104 to 116 show a composition bias toward basic and acidic residues; that stretch reads KAKDERRERRDDF. Acidic residues predominate over residues 120 to 131; the sequence is TADDAEAGDSEE.

This sequence belongs to the bacterial ribosomal protein bS6 family.

Its function is as follows. Binds together with bS18 to 16S ribosomal RNA. The sequence is that of Small ribosomal subunit protein bS6 from Escherichia fergusonii (strain ATCC 35469 / DSM 13698 / CCUG 18766 / IAM 14443 / JCM 21226 / LMG 7866 / NBRC 102419 / NCTC 12128 / CDC 0568-73).